Consider the following 754-residue polypeptide: ATP-dependent RNA helicase DRS1 (754 aa).

Disordered stretches follow at residues 1–61 and 119–227; these read MVVG…NLDE and GLVK…GDEA. A compositionally biased stretch (acidic residues) spans 19–34; sequence DSEDDVPILDSSDDEK. Residues 40–51 show a composition bias toward basic residues; that stretch reads TTKKRKGKNNKK. The segment covering 124–142 has biased composition (basic and acidic residues); the sequence is AHIDSKQEEETEKEKVEKE. Composition is skewed to acidic residues over residues 167–193 and 202–211; these read NQSE…QEEM and DEIDEEDDSE. The residue at position 210 (Ser-210) is a Phosphoserine. The short motif at 233-261 is the Q motif element; sequence ENFNSLSLSRPVLKGLASLGYVKPSPIQS. The Helicase ATP-binding domain maps to 264 to 439; sequence IPIALLGKDI…SLSLKKPVRI (176 aa). 277 to 284 serves as a coordination point for ATP; it reads AVTGSGKT. A DEAD box motif is present at residues 387 to 390; that stretch reads DEAD. Residues 450 to 641 enclose the Helicase C-terminal domain; it reads KLTQEFVRIR…SMNDTIEDIL (192 aa). Residues 623-669 adopt a coiled-coil conformation; the sequence is IEETNKLVESMNDTIEDILVEEKEEKEILRAEMQLRKGENMLKHKKE. Positions 675 to 754 are disordered; that stretch reads RRTWFQSESD…NKKKGFKSRR (80 aa). Residues 696–707 show a composition bias toward basic residues; the sequence is RNKKVTNSKKRK. Residues 724–736 show a composition bias toward basic and acidic residues; it reads TKTDRIADQERTF. The segment covering 737–754 has biased composition (basic residues); sequence KKQKSTNSNKKKGFKSRR.

It belongs to the DEAD box helicase family. DDX27/DRS1 subfamily. Interacts with RRP1 and associates with pre-ribosomal particles.

The protein localises to the nucleus. The protein resides in the nucleolus. It catalyses the reaction ATP + H2O = ADP + phosphate + H(+). ATP-binding RNA helicase involved in ribosome assembly. The chain is ATP-dependent RNA helicase DRS1 (DRS1) from Saccharomyces cerevisiae (strain YJM789) (Baker's yeast).